We begin with the raw amino-acid sequence, 192 residues long: Vascular endothelial growth factor A (192 aa).

The signal sequence occupies residues 1 to 26 (MNFLLSWIHWGLAALLYFHNAKVLQA). 3 disulfide bridges follow: Cys-52–Cys-94, Cys-83–Cys-128, and Cys-87–Cys-130. N-linked (GlcNAc...) asparagine glycosylation occurs at Asn-101.

It belongs to the PDGF/VEGF growth factor family. As to quaternary structure, homodimer; disulfide-linked. Also found as heterodimer with PGF Interacts with FLT1/VEGFR1 and KDR/VEGFR2 receptors, heparan sulfate and heparin. As to expression, expressed by the venom gland, and probably other tissues.

It localises to the secreted. Its function is as follows. Growth factor active in angiogenesis, vasculogenesis and endothelial cell growth. Induces endothelial cell proliferation, promotes cell migration, inhibits apoptosis and induces permeabilization of blood vessels. This is Vascular endothelial growth factor A from Vipera ammodytes ammodytes (Western sand viper).